Here is a 189-residue protein sequence, read N- to C-terminus: Translation machinery-associated protein 22 (189 aa).

Residues Val-94 to Leu-165 enclose the SUI1 domain.

Belongs to the DENR family. Interacts with the 40S ribosomal subunit.

It localises to the cytoplasm. The chain is Translation machinery-associated protein 22 (TMA22) from Debaryomyces hansenii (strain ATCC 36239 / CBS 767 / BCRC 21394 / JCM 1990 / NBRC 0083 / IGC 2968) (Yeast).